A 413-amino-acid polypeptide reads, in one-letter code: Putative competence-damage inducible protein (413 aa).

Belongs to the CinA family.

The chain is Putative competence-damage inducible protein from Halothermothrix orenii (strain H 168 / OCM 544 / DSM 9562).